Here is a 393-residue protein sequence, read N- to C-terminus: uncharacterized protein (393 aa).

Over 1–17 the chain is Cytoplasmic; sequence MVSKDQTSFNKRWTLGL. The chain crosses the membrane as a helical span at residues 18 to 38; it reads LMLGLVIILWVLSSFLINLIF. Residues 39-46 are Vacuolar-facing; sequence EDDSYRKP. Residues 47–67 traverse the membrane as a helical segment; the sequence is FFITYTNTAAFIFYLFPTAKA. Residues 68–132 lie on the Cytoplasmic side of the membrane; that stretch reads VVVNYKDTGR…LYETIKLSAE (65 aa). Serine 93 bears the Phosphoserine mark. Residues 133–153 traverse the membrane as a helical segment; that stretch reads FCILWFTANLVTNASLAFTSV. The Vacuolar segment spans residues 154-156; the sequence is ASQ. A helical transmembrane segment spans residues 157-176; the sequence is TILSTTSSFFTLFIGAICHV. The Cytoplasmic segment spans residues 177-182; the sequence is ESLSKS. Residues 183 to 200 traverse the membrane as a helical segment; sequence KVLGSFISFVGIIMVTKS. Residues 201 to 219 lie on the Vacuolar side of the membrane; the sequence is DSHQRYQRHIADVSGDDND. Residues 220–240 traverse the membrane as a helical segment; sequence AVQVLIGNLLALAGAVLYGVY. The Cytoplasmic segment spans residues 241 to 257; the sequence is STLLKREVGDETRVNMK. Residues 258-278 traverse the membrane as a helical segment; the sequence is IFFGFVGLFNLLFLWPSLIVL. Residues 279 to 292 lie on the Vacuolar side of the membrane; that stretch reads DFFGWEPFSLPKDP. The chain crosses the membrane as a helical span at residues 293-313; that stretch reads KVVVIIFVNCLITFVSDFCWA. Residues 314–321 lie on the Cytoplasmic side of the membrane; sequence KAMLLTSP. A helical transmembrane segment spans residues 322-342; the sequence is LTVTVGLSITIPLAMFGDVIF. Topologically, residues 343–345 are vacuolar; the sequence is KHK. Residues 346-366 form a helical membrane-spanning segment; sequence TMSALYLFGATLILGSFFIIN. The Cytoplasmic segment spans residues 367–393; it reads KSSEEEHFENSITASNYESVEVPAANN.

This sequence belongs to the TPT transporter family.

The protein localises to the vacuole membrane. This is an uncharacterized protein from Saccharomyces cerevisiae (strain ATCC 204508 / S288c) (Baker's yeast).